The chain runs to 201 residues: Superoxide dismutase [Mn] (201 aa).

Positions 27, 81, 163, and 167 each coordinate Mn(2+).

It belongs to the iron/manganese superoxide dismutase family. As to quaternary structure, homodimer. Mn(2+) serves as cofactor.

The protein resides in the secreted. It carries out the reaction 2 superoxide + 2 H(+) = H2O2 + O2. In terms of biological role, destroys superoxide anion radicals which are normally produced within the cells and which are toxic to biological systems. This is Superoxide dismutase [Mn] (sodA) from Streptococcus pyogenes serotype M6 (strain ATCC BAA-946 / MGAS10394).